A 251-amino-acid chain; its full sequence is Anamorsin homolog (251 aa).

An N-terminal SAM-like domain region spans residues 1 to 154 (MINFSNTLVI…AENPDFNKSD (154 aa)). The linker stretch occupies residues 155–167 (DDNNLVSSDEEIY). Cys-170, Cys-181, Cys-184, and Cys-186 together coordinate [2Fe-2S] cluster. Residues 170-186 (CEDKKKVVNRVCDNCTC) form a fe-S binding site A region. Residues Cys-216, Cys-219, Cys-227, and Cys-230 each coordinate [4Fe-4S] cluster. 2 short sequence motifs (cx2C motif) span residues 216–219 (CGNC) and 227–230 (CGSC). Residues 216–230 (CGNCYLGDAFRCGSC) form a fe-S binding site B region.

It belongs to the anamorsin family. In terms of assembly, monomer. [2Fe-2S] cluster is required as a cofactor. [4Fe-4S] cluster serves as cofactor.

It localises to the cytoplasm. It is found in the mitochondrion intermembrane space. Component of the cytosolic iron-sulfur (Fe-S) protein assembly (CIA) machinery. Required for the maturation of extramitochondrial Fe-S proteins. Part of an electron transfer chain functioning in an early step of cytosolic Fe-S biogenesis, facilitating the de novo assembly of a [4Fe-4S] cluster on the cytosolic Fe-S scaffold complex. Electrons are transferred from NADPH via a FAD- and FMN-containing diflavin oxidoreductase. Together with the diflavin oxidoreductase, also required for the assembly of the diferric tyrosyl radical cofactor of ribonucleotide reductase (RNR), probably by providing electrons for reduction during radical cofactor maturation in the catalytic small subunit. The chain is Anamorsin homolog from Plasmodium yoelii yoelii.